Here is a 465-residue protein sequence, read N- to C-terminus: GTPase Der (465 aa).

2 consecutive EngA-type G domains span residues 3–167 (PLVA…PEEG) and 179–352 (VRIA…ASAT). Residues 9–16 (GRPNVGKS), 57–61 (DTGGI), 119–122 (NKID), 185–192 (GRPNVGKS), 232–236 (DTAGL), and 297–300 (NKWD) contribute to the GTP site. Positions 353–437 (HEFSTSEVNQ…PVCFIFREGA (85 aa)) constitute a KH-like domain.

This sequence belongs to the TRAFAC class TrmE-Era-EngA-EngB-Septin-like GTPase superfamily. EngA (Der) GTPase family. In terms of assembly, associates with the 50S ribosomal subunit.

GTPase that plays an essential role in the late steps of ribosome biogenesis. This Xanthomonas oryzae pv. oryzae (strain MAFF 311018) protein is GTPase Der.